The sequence spans 389 residues: UDP-N-acetylglucosamine--N-acetylmuramyl-(pentapeptide) pyrophosphoryl-undecaprenol N-acetylglucosamine transferase (389 aa).

UDP-N-acetyl-alpha-D-glucosamine-binding positions include 39–41 (TGG), Asn-157, Arg-193, Ser-221, Ile-275, 294–299 (ALTVSE), and Gln-320.

The protein belongs to the glycosyltransferase 28 family. MurG subfamily.

Its subcellular location is the cell inner membrane. It carries out the reaction di-trans,octa-cis-undecaprenyl diphospho-N-acetyl-alpha-D-muramoyl-L-alanyl-D-glutamyl-meso-2,6-diaminopimeloyl-D-alanyl-D-alanine + UDP-N-acetyl-alpha-D-glucosamine = di-trans,octa-cis-undecaprenyl diphospho-[N-acetyl-alpha-D-glucosaminyl-(1-&gt;4)]-N-acetyl-alpha-D-muramoyl-L-alanyl-D-glutamyl-meso-2,6-diaminopimeloyl-D-alanyl-D-alanine + UDP + H(+). It participates in cell wall biogenesis; peptidoglycan biosynthesis. Functionally, cell wall formation. Catalyzes the transfer of a GlcNAc subunit on undecaprenyl-pyrophosphoryl-MurNAc-pentapeptide (lipid intermediate I) to form undecaprenyl-pyrophosphoryl-MurNAc-(pentapeptide)GlcNAc (lipid intermediate II). The chain is UDP-N-acetylglucosamine--N-acetylmuramyl-(pentapeptide) pyrophosphoryl-undecaprenol N-acetylglucosamine transferase from Saccharophagus degradans (strain 2-40 / ATCC 43961 / DSM 17024).